The following is a 245-amino-acid chain: Dehydrogenase/reductase SDR family member 6 (245 aa).

Residues 16 to 18 (QGI), Asp37, and Asp58 contribute to the NAD(+) site. Arg144 contributes to the substrate binding site. The Proton acceptor role is filled by Tyr147. Residues Lys151 and 180 to 184 (VDTPS) contribute to the NAD(+) site. The substrate site is built by Arg188 and Arg205.

Belongs to the short-chain dehydrogenases/reductases (SDR) family. As to quaternary structure, homotetramer.

The protein localises to the cytoplasm. It carries out the reaction cis-4-hydroxy-L-proline + NAD(+) = 4-oxo-L-proline + NADH + H(+). It catalyses the reaction (R)-3-hydroxybutanoate + NAD(+) = acetoacetate + NADH + H(+). It participates in amino-acid metabolism. Its pathway is siderophore biosynthesis. Its function is as follows. NAD(H)-dependent dehydrogenase/reductase with a preference for cyclic substrates. Catalyzes stereoselective conversion of 4-oxo-L-proline to cis-4-hydroxy-L-proline, likely a detoxification mechanism for ketoprolines. Mediates the formation of 2,5-dihydroxybenzoate (2,5-DHBA), a siderophore that chelates free cytoplasmic iron and associates with LCN2, thereby regulating iron transport and homeostasis while protecting cells against free radical-induced oxidative stress. The iron-siderophore complex is imported into mitochondria, providing an iron source for mitochondrial metabolic processes in particular heme synthesis. May act as a 3-hydroxybutyrate dehydrogenase. The polypeptide is Dehydrogenase/reductase SDR family member 6 (BDH2) (Bos taurus (Bovine)).